We begin with the raw amino-acid sequence, 322 residues long: Acetyl-coenzyme A carboxylase carboxyl transferase subunit alpha (322 aa).

Residues 39 to 293 (RLAAKSQQLT…KRALAESLRQ (255 aa)) enclose the CoA carboxyltransferase C-terminal domain.

It belongs to the AccA family. As to quaternary structure, acetyl-CoA carboxylase is a heterohexamer composed of biotin carboxyl carrier protein (AccB), biotin carboxylase (AccC) and two subunits each of ACCase subunit alpha (AccA) and ACCase subunit beta (AccD).

The protein resides in the cytoplasm. The enzyme catalyses N(6)-carboxybiotinyl-L-lysyl-[protein] + acetyl-CoA = N(6)-biotinyl-L-lysyl-[protein] + malonyl-CoA. It participates in lipid metabolism; malonyl-CoA biosynthesis; malonyl-CoA from acetyl-CoA: step 1/1. Functionally, component of the acetyl coenzyme A carboxylase (ACC) complex. First, biotin carboxylase catalyzes the carboxylation of biotin on its carrier protein (BCCP) and then the CO(2) group is transferred by the carboxyltransferase to acetyl-CoA to form malonyl-CoA. The sequence is that of Acetyl-coenzyme A carboxylase carboxyl transferase subunit alpha from Ralstonia nicotianae (strain ATCC BAA-1114 / GMI1000) (Ralstonia solanacearum).